Consider the following 156-residue polypeptide: Small ribosomal subunit protein uS7 (156 aa).

This sequence belongs to the universal ribosomal protein uS7 family. In terms of assembly, part of the 30S ribosomal subunit. Contacts proteins S9 and S11.

In terms of biological role, one of the primary rRNA binding proteins, it binds directly to 16S rRNA where it nucleates assembly of the head domain of the 30S subunit. Is located at the subunit interface close to the decoding center, probably blocks exit of the E-site tRNA. The chain is Small ribosomal subunit protein uS7 from Rhodococcus opacus (strain B4).